The following is a 262-amino-acid chain: 3-deoxy-manno-octulosonate cytidylyltransferase (262 aa).

Belongs to the KdsB family.

It localises to the cytoplasm. It carries out the reaction 3-deoxy-alpha-D-manno-oct-2-ulosonate + CTP = CMP-3-deoxy-beta-D-manno-octulosonate + diphosphate. It functions in the pathway nucleotide-sugar biosynthesis; CMP-3-deoxy-D-manno-octulosonate biosynthesis; CMP-3-deoxy-D-manno-octulosonate from 3-deoxy-D-manno-octulosonate and CTP: step 1/1. The protein operates within bacterial outer membrane biogenesis; lipopolysaccharide biosynthesis. Its function is as follows. Activates KDO (a required 8-carbon sugar) for incorporation into bacterial lipopolysaccharide in Gram-negative bacteria. The chain is 3-deoxy-manno-octulosonate cytidylyltransferase from Acidovorax ebreus (strain TPSY) (Diaphorobacter sp. (strain TPSY)).